Consider the following 239-residue polypeptide: Wilms tumor protein homolog (239 aa).

The 9aaTAD motif lies at 43–51 (MTWNQMNLG). 3 consecutive C2H2-type zinc fingers follow at residues 113–137 (FMCAYPGCNKRYFKLSHLQMHSRKH), 143–167 (YQCDFKDCERRFSRSDQLKRHQRRH), and 173–195 (FQCKTCQRKFSRSDHLKTHTRTH). Important for interaction with target DNA regions lie at residues 157-171 (SDQLKRHQRRHTGVK) and 183-191 (SRSDHLKTH). Positions 198–200 (KTS) match the KTS motif motif. Residues 204 to 228 (FSCRWPSCQKKFARSDELVRHHNMH) form a C2H2-type 4 zinc finger. Lysine 234 participates in a covalent cross-link: Glycyl lysine isopeptide (Lys-Gly) (interchain with G-Cter in SUMO2).

This sequence belongs to the EGR C2H2-type zinc-finger protein family. As to quaternary structure, interacts with ZNF224 via the zinc-finger region. Interacts with WTAP, AMER1 and SRY. Homodimer. Interacts with WTIP. Interacts with actively translating polysomes. Detected in nuclear ribonucleoprotein (mRNP) particles. Interacts with U2AF2. Interacts with HNRNPU via the zinc-finger region. Interacts with CITED2.

Its subcellular location is the nucleus speckle. The protein resides in the nucleus. The protein localises to the nucleoplasm. It is found in the cytoplasm. Transcription factor that plays an important role in cellular development and cell survival. Recognizes and binds to the DNA sequence 5'-GCG(T/G)GGGCG-3'. Regulates the expression of numerous target genes, including EPO. Plays an essential role for development of the urogenital system. It has a tumor suppressor as well as an oncogenic role in tumor formation. Function may be isoform-specific: isoforms lacking the KTS motif may act as transcription factors. Isoforms containing the KTS motif may bind mRNA and play a role in mRNA metabolism or splicing. This chain is Wilms tumor protein homolog (WT1), found in Sminthopsis macroura (Stripe-faced dunnart).